Consider the following 496-residue polypeptide: Cytochrome P450 71D179 (496 aa).

The helical; Signal-anchor for type II membrane protein transmembrane segment at 1–21 threads the bilayer; it reads MDISISWVVIIVSVLSYLILM. Residue C435 coordinates heme.

The protein belongs to the cytochrome P450 family. The cofactor is heme.

Its subcellular location is the membrane. The protein operates within secondary metabolite biosynthesis; terpenoid biosynthesis. In terms of biological role, involved in the biosynthesis of phenolic monoterpenes natural products thymol and carvacrol which have a broad range of biological activities acting as antimicrobial compounds, insecticides, antioxidants and pharmaceutical agents. Catalyzes probably the C3-hydroxylation of gamma-terpinene to produce thymol. This Thymus vulgaris (Thyme) protein is Cytochrome P450 71D179.